A 255-amino-acid polypeptide reads, in one-letter code: Indole-3-glycerol phosphate synthase (255 aa).

It belongs to the TrpC family.

The enzyme catalyses 1-(2-carboxyphenylamino)-1-deoxy-D-ribulose 5-phosphate + H(+) = (1S,2R)-1-C-(indol-3-yl)glycerol 3-phosphate + CO2 + H2O. Its pathway is amino-acid biosynthesis; L-tryptophan biosynthesis; L-tryptophan from chorismate: step 4/5. In Priestia megaterium (strain ATCC 12872 / QMB1551) (Bacillus megaterium), this protein is Indole-3-glycerol phosphate synthase (trpC).